A 368-amino-acid polypeptide reads, in one-letter code: Interferon-stimulated 20 kDa exonuclease-like 2 (368 aa).

2 disordered regions span residues 33–107 (FLEQ…APSK) and 127–187 (PKTK…PTVP). A compositionally biased stretch (polar residues) spans 42–54 (KKNQPPNKVSKLN). The span at 77 to 96 (KKKEAAASKRDSERSKDKKA) shows a compositional bias: basic and acidic residues. Positions 131–145 (STQKKGSKKKSLKKK) are enriched in basic residues. An Exonuclease domain is found at 194–368 (MVAIDCEMVG…QHLAQNPPEN (175 aa)).

The protein resides in the nucleus. It localises to the nucleolus. In terms of biological role, 3'-&gt; 5'-exoribonuclease involved in ribosome biogenesis in the processing of the 12S pre-rRNA. Displays a strong specificity for a 3'-end containing a free hydroxyl group. In Mus musculus (Mouse), this protein is Interferon-stimulated 20 kDa exonuclease-like 2 (Isg20l2).